A 411-amino-acid polypeptide reads, in one-letter code: Phosphopentomutase (411 aa).

Aspartate 14, aspartate 306, histidine 311, aspartate 347, histidine 348, and histidine 359 together coordinate Mn(2+).

Belongs to the phosphopentomutase family. Mn(2+) is required as a cofactor.

Its subcellular location is the cytoplasm. It carries out the reaction 2-deoxy-alpha-D-ribose 1-phosphate = 2-deoxy-D-ribose 5-phosphate. The enzyme catalyses alpha-D-ribose 1-phosphate = D-ribose 5-phosphate. Its pathway is carbohydrate degradation; 2-deoxy-D-ribose 1-phosphate degradation; D-glyceraldehyde 3-phosphate and acetaldehyde from 2-deoxy-alpha-D-ribose 1-phosphate: step 1/2. Its function is as follows. Isomerase that catalyzes the conversion of deoxy-ribose 1-phosphate (dRib-1-P) and ribose 1-phosphate (Rib-1-P) to deoxy-ribose 5-phosphate (dRib-5-P) and ribose 5-phosphate (Rib-5-P), respectively. This chain is Phosphopentomutase, found in Lactococcus lactis subsp. cremoris (strain SK11).